A 333-amino-acid chain; its full sequence is 6-phosphogluconolactonase (333 aa).

It belongs to the cycloisomerase 2 family.

The enzyme catalyses 6-phospho-D-glucono-1,5-lactone + H2O = 6-phospho-D-gluconate + H(+). It functions in the pathway carbohydrate degradation; pentose phosphate pathway; D-ribulose 5-phosphate from D-glucose 6-phosphate (oxidative stage): step 2/3. Functionally, catalyzes the hydrolysis of 6-phosphogluconolactone to 6-phosphogluconate. The polypeptide is 6-phosphogluconolactonase (Buchnera aphidicola subsp. Schizaphis graminum (strain Sg)).